Consider the following 762-residue polypeptide: Polyribonucleotide nucleotidyltransferase (762 aa).

Mg(2+) contacts are provided by aspartate 531 and aspartate 537. The 60-residue stretch at 597 to 656 (PRVTTIKVPVDKIGEVIGPKGKVINSITEETRAQISIEDDGTVFVGATDGPSAQAAIDKI) folds into the KH domain. In terms of domain architecture, S1 motif spans 668-737 (GERFLGTVVK…KRGKISLVLV (70 aa)).

Belongs to the polyribonucleotide nucleotidyltransferase family. The cofactor is Mg(2+).

The protein resides in the cytoplasm. The catalysed reaction is RNA(n+1) + phosphate = RNA(n) + a ribonucleoside 5'-diphosphate. Involved in mRNA degradation. Catalyzes the phosphorolysis of single-stranded polyribonucleotides processively in the 3'- to 5'-direction. The chain is Polyribonucleotide nucleotidyltransferase from Mycobacterium ulcerans (strain Agy99).